Here is a 159-residue protein sequence, read N- to C-terminus: NAD(P)H-quinone oxidoreductase subunit J, chloroplastic (159 aa).

The protein belongs to the complex I 30 kDa subunit family. NDH is composed of at least 16 different subunits, 5 of which are encoded in the nucleus.

The protein resides in the plastid. It is found in the chloroplast thylakoid membrane. The catalysed reaction is a plastoquinone + NADH + (n+1) H(+)(in) = a plastoquinol + NAD(+) + n H(+)(out). The enzyme catalyses a plastoquinone + NADPH + (n+1) H(+)(in) = a plastoquinol + NADP(+) + n H(+)(out). In terms of biological role, NDH shuttles electrons from NAD(P)H:plastoquinone, via FMN and iron-sulfur (Fe-S) centers, to quinones in the photosynthetic chain and possibly in a chloroplast respiratory chain. The immediate electron acceptor for the enzyme in this species is believed to be plastoquinone. Couples the redox reaction to proton translocation, and thus conserves the redox energy in a proton gradient. The protein is NAD(P)H-quinone oxidoreductase subunit J, chloroplastic of Populus trichocarpa (Western balsam poplar).